Here is a 264-residue protein sequence, read N- to C-terminus: Apolipoprotein A-I (264 aa).

Positions Met-1 to Ala-18 are cleaved as a signal peptide. 2 tandem repeats follow at residues Leu-67 to Gly-88 and Pro-89 to Asn-110. The tract at residues Leu-67–Gln-264 is 10 X approximate tandem repeats. Met-109 bears the Methionine sulfoxide mark. Residues Lys-111 to Gln-121 form a 3; half-length repeat. Repeat copies occupy residues Pro-122–Glu-143, Pro-144–Thr-165, and Pro-166–Ala-187. The stretch at Pro-188 to Ser-207 is one 7; truncated repeat. Met-193 is subject to Methionine sulfoxide. Repeat 8 spans residues Ala-208–Lys-229. The stretch at Pro-230–Leu-240 is one 9; half-length repeat. Residues Pro-241–Gln-264 form repeat 10.

The protein belongs to the apolipoprotein A1/A4/E family. As to quaternary structure, homodimer. Interacts with APOA1BP and CLU. Component of a sperm activating protein complex (SPAP), consisting of APOA1, an immunoglobulin heavy chain, an immunoglobulin light chain and albumin. Interacts with NDRG1. Interacts with SCGB3A2. Interacts with NAXE and YJEFN3. Glycosylated. In terms of processing, palmitoylated. Post-translationally, phosphorylation sites are present in the extracellular medium.

It localises to the secreted. In terms of biological role, participates in the reverse transport of cholesterol from tissues to the liver for excretion by promoting cholesterol efflux from tissues and by acting as a cofactor for the lecithin cholesterol acyltransferase (LCAT). As part of the SPAP complex, activates spermatozoa motility. The chain is Apolipoprotein A-I (APOA1) from Castor canadensis (American beaver).